The primary structure comprises 349 residues: Succinylglutamate desuccinylase (349 aa).

Residues histidine 70, glutamate 73, and histidine 166 each contribute to the Zn(2+) site. Residue glutamate 229 is part of the active site.

Belongs to the AspA/AstE family. Succinylglutamate desuccinylase subfamily. The cofactor is Zn(2+).

The enzyme catalyses N-succinyl-L-glutamate + H2O = L-glutamate + succinate. Its pathway is amino-acid degradation; L-arginine degradation via AST pathway; L-glutamate and succinate from L-arginine: step 5/5. Functionally, transforms N(2)-succinylglutamate into succinate and glutamate. This chain is Succinylglutamate desuccinylase, found in Burkholderia mallei (strain ATCC 23344).